The primary structure comprises 328 residues: MNLQEKTAWITHVARRVIDGDTLSFEEATALLQLPDAVTPFLLGWADVVRKCFHGNRVDLCAIVNARAGRCSEDCRFCTQAACYHTRAPVYPLLPAEGIIRRARAVRSQGIKRFSLVTSGRDPGGDFEKILGITRQLKREVPELKLCASLGIISPTEARALKEAGLDRYHHNLETAASFFPEVCTTHRYEDRVATIRAAQKVGLEVCAGGIIGLGEKPEQRVELALALRELGVTSVPVNILHPVPGTPLATQPPLPALEILRTLAVFRLLLPATTIRYAGGREHNLRDTQVLGLAGGVDALITGDYLTTAGQGTARDRQLIRDLGLEG.

Residues 53-282 (FHGNRVDLCA…ATTIRYAGGR (230 aa)) form the Radical SAM core domain. [4Fe-4S] cluster contacts are provided by Cys-71, Cys-75, and Cys-78. [2Fe-2S] cluster contacts are provided by Ser-115, Cys-147, Cys-207, and Arg-277.

It belongs to the radical SAM superfamily. Biotin synthase family. As to quaternary structure, homodimer. The cofactor is [4Fe-4S] cluster. It depends on [2Fe-2S] cluster as a cofactor.

It carries out the reaction (4R,5S)-dethiobiotin + (sulfur carrier)-SH + 2 reduced [2Fe-2S]-[ferredoxin] + 2 S-adenosyl-L-methionine = (sulfur carrier)-H + biotin + 2 5'-deoxyadenosine + 2 L-methionine + 2 oxidized [2Fe-2S]-[ferredoxin]. The protein operates within cofactor biosynthesis; biotin biosynthesis; biotin from 7,8-diaminononanoate: step 2/2. In terms of biological role, catalyzes the conversion of dethiobiotin (DTB) to biotin by the insertion of a sulfur atom into dethiobiotin via a radical-based mechanism. The polypeptide is Biotin synthase (Desulforudis audaxviator (strain MP104C)).